A 432-amino-acid polypeptide reads, in one-letter code: Ornithine decarboxylase 1A, chloroplastic (432 aa).

At lysine 95 the chain carries N6-(pyridoxal phosphate)lysine. Pyridoxal 5'-phosphate contacts are provided by residues serine 227, glycine 265, and 298–301 (EPGR). 341-342 (YD) serves as a coordination point for substrate. The active-site Proton donor; shared with dimeric partner is cysteine 377. Aspartate 378 is a binding site for substrate. A pyridoxal 5'-phosphate-binding site is contributed by tyrosine 406.

Belongs to the Orn/Lys/Arg decarboxylase class-II family. In terms of assembly, homodimer. Only the dimer is catalytically active, as the active sites are constructed of residues from both monomers. The cofactor is pyridoxal 5'-phosphate.

It is found in the plastid. Its subcellular location is the chloroplast. It carries out the reaction L-ornithine + H(+) = putrescine + CO2. The protein operates within alkaloid biosynthesis; nicotine biosynthesis. It participates in amine and polyamine biosynthesis; putrescine biosynthesis via L-ornithine pathway; putrescine from L-ornithine: step 1/1. Involved in the biosynthesis of pyridine alkaloid natural products, leading mainly to the production of anabasine, anatabine, nicotine and nornicotine, effective deterrents against herbivores with antiparasitic and pesticide properties (neurotoxins); nornicotine serves as the precursor in the synthesis of the carcinogen compound N'-nitrosonornicotine (NNN). Catalyzes the first and rate-limiting step of polyamine biosynthesis that converts ornithine into putrescine, which is the precursor for the polyamines, spermidine and spermine. Polyamines are essential for cell proliferation and are implicated in cellular processes, ranging from DNA replication to apoptosis. The chain is Ornithine decarboxylase 1A, chloroplastic from Nicotiana tabacum (Common tobacco).